Reading from the N-terminus, the 226-residue chain is Putative uroporphyrinogen-III synthase (226 aa).

It belongs to the uroporphyrinogen-III synthase family.

It carries out the reaction hydroxymethylbilane = uroporphyrinogen III + H2O. It participates in porphyrin-containing compound metabolism; protoporphyrin-IX biosynthesis; coproporphyrinogen-III from 5-aminolevulinate: step 3/4. Its function is as follows. Catalyzes cyclization of the linear tetrapyrrole, hydroxymethylbilane, to the macrocyclic uroporphyrinogen III. This chain is Putative uroporphyrinogen-III synthase, found in Archaeoglobus fulgidus (strain ATCC 49558 / DSM 4304 / JCM 9628 / NBRC 100126 / VC-16).